A 221-amino-acid chain; its full sequence is Thiamine-phosphate synthase (221 aa).

4-amino-2-methyl-5-(diphosphooxymethyl)pyrimidine is bound by residues 47–51 and N79; that span reads QYREK. Positions 80 and 99 each coordinate Mg(2+). T118 contributes to the 4-amino-2-methyl-5-(diphosphooxymethyl)pyrimidine binding site. Residue 144–146 participates in 2-[(2R,5Z)-2-carboxy-4-methylthiazol-5(2H)-ylidene]ethyl phosphate binding; it reads SFT. Position 147 (K147) interacts with 4-amino-2-methyl-5-(diphosphooxymethyl)pyrimidine. Residues G175 and 195 to 196 each bind 2-[(2R,5Z)-2-carboxy-4-methylthiazol-5(2H)-ylidene]ethyl phosphate; that span reads VT.

Belongs to the thiamine-phosphate synthase family. Mg(2+) serves as cofactor.

It catalyses the reaction 2-[(2R,5Z)-2-carboxy-4-methylthiazol-5(2H)-ylidene]ethyl phosphate + 4-amino-2-methyl-5-(diphosphooxymethyl)pyrimidine + 2 H(+) = thiamine phosphate + CO2 + diphosphate. The catalysed reaction is 2-(2-carboxy-4-methylthiazol-5-yl)ethyl phosphate + 4-amino-2-methyl-5-(diphosphooxymethyl)pyrimidine + 2 H(+) = thiamine phosphate + CO2 + diphosphate. The enzyme catalyses 4-methyl-5-(2-phosphooxyethyl)-thiazole + 4-amino-2-methyl-5-(diphosphooxymethyl)pyrimidine + H(+) = thiamine phosphate + diphosphate. The protein operates within cofactor biosynthesis; thiamine diphosphate biosynthesis; thiamine phosphate from 4-amino-2-methyl-5-diphosphomethylpyrimidine and 4-methyl-5-(2-phosphoethyl)-thiazole: step 1/1. In terms of biological role, condenses 4-methyl-5-(beta-hydroxyethyl)thiazole monophosphate (THZ-P) and 2-methyl-4-amino-5-hydroxymethyl pyrimidine pyrophosphate (HMP-PP) to form thiamine monophosphate (TMP). The chain is Thiamine-phosphate synthase from Caldicellulosiruptor saccharolyticus (strain ATCC 43494 / DSM 8903 / Tp8T 6331).